Here is a 317-residue protein sequence, read N- to C-terminus: Lipoyl synthase (317 aa).

[4Fe-4S] cluster-binding residues include C59, C64, C70, C85, C89, C92, and S298. Residues 71-287 (WSQRHASFMI…AKIGKAKGFL (217 aa)) enclose the Radical SAM core domain.

Belongs to the radical SAM superfamily. Lipoyl synthase family. Requires [4Fe-4S] cluster as cofactor.

Its subcellular location is the cytoplasm. It catalyses the reaction [[Fe-S] cluster scaffold protein carrying a second [4Fe-4S](2+) cluster] + N(6)-octanoyl-L-lysyl-[protein] + 2 oxidized [2Fe-2S]-[ferredoxin] + 2 S-adenosyl-L-methionine + 4 H(+) = [[Fe-S] cluster scaffold protein] + N(6)-[(R)-dihydrolipoyl]-L-lysyl-[protein] + 4 Fe(3+) + 2 hydrogen sulfide + 2 5'-deoxyadenosine + 2 L-methionine + 2 reduced [2Fe-2S]-[ferredoxin]. Its pathway is protein modification; protein lipoylation via endogenous pathway; protein N(6)-(lipoyl)lysine from octanoyl-[acyl-carrier-protein]: step 2/2. Its function is as follows. Catalyzes the radical-mediated insertion of two sulfur atoms into the C-6 and C-8 positions of the octanoyl moiety bound to the lipoyl domains of lipoate-dependent enzymes, thereby converting the octanoylated domains into lipoylated derivatives. The protein is Lipoyl synthase of Bartonella bacilliformis (strain ATCC 35685 / KC583 / Herrer 020/F12,63).